A 127-amino-acid chain; its full sequence is Holo-[acyl-carrier-protein] synthase (127 aa).

Mg(2+) is bound by residues Asp-9 and Glu-58.

The protein belongs to the P-Pant transferase superfamily. AcpS family. Requires Mg(2+) as cofactor.

The protein resides in the cytoplasm. It catalyses the reaction apo-[ACP] + CoA = holo-[ACP] + adenosine 3',5'-bisphosphate + H(+). Functionally, transfers the 4'-phosphopantetheine moiety from coenzyme A to a Ser of acyl-carrier-protein. The protein is Holo-[acyl-carrier-protein] synthase of Shewanella sp. (strain ANA-3).